A 158-amino-acid polypeptide reads, in one-letter code: U4/U6.U5 small nuclear ribonucleoprotein 27 kDa protein (158 aa).

Basic residues predominate over residues 1–30; the sequence is MGRSRSRTPPRRERRRSRSSSRDRERRRRE. The segment at 1-100 is disordered; it reads MGRSRSRTPP…ISAEDMQGKT (100 aa). A compositionally biased stretch (basic and acidic residues) spans 31 to 41; the sequence is RERSRSRDRDR. Residues 42 to 62 show a composition bias toward basic residues; it reads RRSRSRSPHRRRSRSPRRHRS. Over residues 69–86 the composition is skewed to basic and acidic residues; the sequence is RQKDRRDDDRKDVKEKPA.

The protein belongs to the SNUT3 family. As to quaternary structure, part of a tri-snRNP complex.

Its subcellular location is the nucleus. Functionally, may play a role in mRNA splicing. This Danio rerio (Zebrafish) protein is U4/U6.U5 small nuclear ribonucleoprotein 27 kDa protein (snrnp27).